Reading from the N-terminus, the 320-residue chain is MRQTKTGILLANLGTPDAPTPEAVKRYLKQFLSDRRVVDTPRLLWWPLLRGVILPLRSPRVAKLYQSIWMDGGSPLMVYSREQQQALAARLPDTPVALGMSYGSPSLESAVDELLASDVDHIVVLPLYPQYSCSTVGAVWDELGRILARKRRIPGISFIRDYADDSAYIDALAKSARESFARHGEPDVLLLSYHGIPQRYADEGDDYPQRCRDTTRELVSALGLPPEKVMMTFQSRFGREPWLTPYTDETLKMLGEKGTGHIQVMCPGFAADCLETLEEIAEQNREIFLEAGGKKYAYIPALNATPEHIDMMLKLTAPYR.

2 residues coordinate Fe cation: His-194 and Glu-275.

Belongs to the ferrochelatase family. Monomer.

It is found in the cytoplasm. It carries out the reaction heme b + 2 H(+) = protoporphyrin IX + Fe(2+). It functions in the pathway porphyrin-containing compound metabolism; protoheme biosynthesis; protoheme from protoporphyrin-IX: step 1/1. Functionally, catalyzes the ferrous insertion into protoporphyrin IX. The chain is Ferrochelatase from Salmonella dublin (strain CT_02021853).